The following is a 46-amino-acid chain: Apamin (46 aa).

The signal sequence occupies residues 1-27 (MISMLRCISLFLSVILITGYFVTPVMS). Cystine bridges form between Cys-28–Cys-38 and Cys-30–Cys-42. The segment at 40-41 (RR) is essential for toxin activity. His-45 bears the Histidine amide mark.

In terms of tissue distribution, expressed by the venom gland.

It is found in the secreted. Functionally, neurotoxin that blocks voltage-independent calcium-activated potassium channels (KCNN1=SK1, KCNN2=SK2, KCNN3=SK3). The chain is Apamin from Apis cerana cerana (Oriental honeybee).